A 361-amino-acid polypeptide reads, in one-letter code: C3a anaphylatoxin chemotactic receptor (361 aa).

At 1-64 the chain is on the extracellular side; that stretch reads MQQETQAPPL…FASSEVRVIS (64 aa). N-linked (GlcNAc...) asparagine glycans are attached at residues Asn36 and Asn50. Residues 65–85 traverse the membrane as a helical segment; the sequence is LVVYCLTFLLGVPGNSFVIFI. Over 86–96 the chain is Cytoplasmic; that stretch reads AGMKMKRTVNT. A helical transmembrane segment spans residues 97–117; that stretch reads IWFLNLATADLLCCLSVPLTV. At 118–134 the chain is on the extracellular side; it reads AEILLDHHWPYGYAMCK. Cys133 and Cys210 are disulfide-bonded. The chain crosses the membrane as a helical span at residues 135–155; it reads ILPSVIVISMFASVFTLNIIS. At 156–177 the chain is on the cytoplasmic side; the sequence is LDRFTQVITPVWAQNHRSLLLA. A helical membrane pass occupies residues 178 to 198; it reads RLSCVAVWILALLLSLPFMIL. Over 199–224 the chain is Extracellular; it reads RRTYEEFNMTVCTFDDDDFTTYGALS. A helical membrane pass occupies residues 225 to 245; that stretch reads IVRFVFGFLIPLMSIVTCYGI. Residues 246–262 lie on the Cytoplasmic side of the membrane; that stretch reads IARKLGSRHFRSGRAFR. The chain crosses the membrane as a helical span at residues 263 to 283; sequence IMLAVIVAFFLCWMPYHVLDL. At 284 to 301 the chain is on the extracellular side; it reads IRSYGGESSSMVALKVDP. The chain crosses the membrane as a helical span at residues 302–322; the sequence is LAISLAYVNSCLNPVLYVFMG. The Cytoplasmic segment spans residues 323 to 361; sequence QDFKNKVQLSLRRVFERAFSEEGTQISRSTQSQQVHSVL.

The protein belongs to the G-protein coupled receptor 1 family.

It is found in the cell membrane. In terms of biological role, receptor for the chemotactic and inflammatory peptide anaphylatoxin C3a. This receptor stimulates chemotaxis, granule enzyme release and superoxide anion production. The polypeptide is C3a anaphylatoxin chemotactic receptor (c3ar1) (Danio rerio (Zebrafish)).